Consider the following 370-residue polypeptide: F-box/kelch-repeat protein At4g38940 (370 aa).

The F-box domain maps to 18-64 (PCLISLLPEEIVVDIVARVPRCYYPTLSQVSRRFRSLVASPEIYKRR). Kelch repeat units lie at residues 131 to 177 (NIFV…LIDR), 178 to 230 (KIYV…VIGG), and 263 to 315 (SACV…SYTG).

In terms of assembly, part of a SCF (ASK-cullin-F-box) protein ligase complex. Interacts with SKP1A/ASK1, SKP1B/ASK2, ASK11, ASK13 and ASK18.

It localises to the nucleus. Its pathway is protein modification; protein ubiquitination. Its function is as follows. Component of SCF(ASK-cullin-F-box) E3 ubiquitin ligase complexes, which may mediate the ubiquitination and subsequent proteasomal degradation of target proteins. In Arabidopsis thaliana (Mouse-ear cress), this protein is F-box/kelch-repeat protein At4g38940.